The chain runs to 711 residues: Polyribonucleotide nucleotidyltransferase (711 aa).

Residues aspartate 486 and aspartate 492 each contribute to the Mg(2+) site. Positions 553–612 constitute a KH domain; that stretch reads PRIHTIKINPDKIKDVIGKGGSVIRALTEETGTTIEIEDDGTVKIAATDGEKAKHAIRRI. One can recognise an S1 motif domain in the interval 622-690; that stretch reads GRVYNGKVTR…RQGRIRLSIK (69 aa). A disordered region spans residues 690 to 711; sequence KEATEQSQPAAALEAPAAEQGE. A compositionally biased stretch (low complexity) spans 698 to 711; sequence PAAALEAPAAEQGE.

It belongs to the polyribonucleotide nucleotidyltransferase family. In terms of assembly, component of the RNA degradosome, which is a multiprotein complex involved in RNA processing and mRNA degradation. The cofactor is Mg(2+).

It is found in the cytoplasm. It catalyses the reaction RNA(n+1) + phosphate = RNA(n) + a ribonucleoside 5'-diphosphate. Involved in mRNA degradation. Catalyzes the phosphorolysis of single-stranded polyribonucleotides processively in the 3'- to 5'-direction. The protein is Polyribonucleotide nucleotidyltransferase of Escherichia coli O127:H6 (strain E2348/69 / EPEC).